Consider the following 464-residue polypeptide: Keratin, type I cytoskeletal 28 (464 aa).

The interval methionine 1–asparagine 85 is head. A coil 1A region spans residues glutamate 86–tryptophan 121. Positions glutamate 86–cysteine 401 constitute an IF rod domain. Residues tyrosine 122–threonine 143 form a linker 1 region. A coil 1B region spans residues isoleucine 144 to leucine 235. The linker 12 stretch occupies residues glutamine 236–leucine 258. The coil 2 stretch occupies residues leucine 259–aspartate 397. A tail region spans residues glycine 398–phenylalanine 464. The interval isoleucine 443–phenylalanine 464 is disordered.

The protein belongs to the intermediate filament family. As to quaternary structure, heterotetramer of two type I and two type II keratins. As to expression, strongly expressed in skin and scalp, and weak expression observed in thymus. In the hair follicle, expressed in Henle layer, Huxley layer and in the irs cuticle. Expression extends from the bulb region up to the point of differentiation into the three layers. Also present in the medulla of beard hair (at protein level).

The protein localises to the cytoplasm. Essential for the proper assembly of types I and II keratin protein complexes and the formation of keratin intermediate filaments in the inner root sheath (irs). The chain is Keratin, type I cytoskeletal 28 from Homo sapiens (Human).